The primary structure comprises 313 residues: Homoserine O-succinyltransferase (313 aa).

The Acyl-thioester intermediate role is filled by Cys-142. Substrate-binding residues include Lys-163 and Ser-192. The Proton acceptor role is filled by His-235. Residue Glu-237 is part of the active site. A substrate-binding site is contributed by Arg-249.

It belongs to the MetA family.

It localises to the cytoplasm. It catalyses the reaction L-homoserine + succinyl-CoA = O-succinyl-L-homoserine + CoA. The protein operates within amino-acid biosynthesis; L-methionine biosynthesis via de novo pathway; O-succinyl-L-homoserine from L-homoserine: step 1/1. Functionally, transfers a succinyl group from succinyl-CoA to L-homoserine, forming succinyl-L-homoserine. This chain is Homoserine O-succinyltransferase, found in Aliivibrio fischeri (strain MJ11) (Vibrio fischeri).